A 160-amino-acid polypeptide reads, in one-letter code: Serine-protein kinase RsbW (160 aa).

The protein belongs to the anti-sigma-factor family.

The catalysed reaction is L-seryl-[protein] + ATP = O-phospho-L-seryl-[protein] + ADP + H(+). It carries out the reaction L-threonyl-[protein] + ATP = O-phospho-L-threonyl-[protein] + ADP + H(+). In terms of biological role, negative regulator of sigma-B activity. Phosphorylates and inactivates its specific antagonist protein, RsbV. Upon phosphorylation of RsbV, RsbW is released and binds to sigma-B, thereby blocking its ability to form an RNA polymerase holoenzyme (E-sigma-B). This is Serine-protein kinase RsbW from Bacillus cereus (strain Q1).